Reading from the N-terminus, the 646-residue chain is Chaperone protein DnaK (646 aa).

T198 carries the phosphothreonine; by autocatalysis modification. A disordered region spans residues 603 to 646; the sequence is EQAQQAGGAEGFDPNAFQGGDAGQQKADDGVVDAEFTEVKDDKK. A compositionally biased stretch (low complexity) spans 618-627; it reads AFQGGDAGQQ.

The protein belongs to the heat shock protein 70 family.

Acts as a chaperone. The polypeptide is Chaperone protein DnaK (Acinetobacter baumannii (strain AB307-0294)).